Consider the following 81-residue polypeptide: Acyl carrier protein (81 aa).

Positions 2–77 (ASIEERVVDI…EAIDFIEKEK (76 aa)) constitute a Carrier domain. An O-(pantetheine 4'-phosphoryl)serine modification is found at Ser37.

This sequence belongs to the acyl carrier protein (ACP) family. Post-translationally, 4'-phosphopantetheine is transferred from CoA to a specific serine of apo-ACP by AcpS. This modification is essential for activity because fatty acids are bound in thioester linkage to the sulfhydryl of the prosthetic group.

Its subcellular location is the cytoplasm. Its pathway is lipid metabolism; fatty acid biosynthesis. Carrier of the growing fatty acid chain in fatty acid biosynthesis. The chain is Acyl carrier protein from Rhodopirellula baltica (strain DSM 10527 / NCIMB 13988 / SH1).